The following is a 2276-amino-acid chain: MAQKLRFYLFGDQTYDYDEQLRALLTSHDPVVRSFLERAYYTLRAEVARIPNGYQARISRFSSIAELLSQRREHGVDASLEQALTVVYQLASFMRLHSERSLSYPSADDAHCLGLCTGALSAAAVSSSRSLSELLPAAIETVILAFRTGLHASDSGRRIEESSAAAKCWSISLQGLEGHVARKLLEEWSNKKRLPPMSRPYISAYASGGVTISGPPSVLAELRNTPGLSKLRAKDIPIHAPYHSSAIFNQCDVETILSSALIDLASRATHVPILSTGTGRLVWAGTLPAAIQSALQDVLLRPISWENMSCGISTCLQSIDPSEVEVIPIATLAGPLLCRSVQVAKSQIPATIDPKNDVMNEAQSQIAEAMDRAKIAIVGMSGRFPGAENVDSLWELLMAGRDMCKEVPPTRWNVDTHVDPTGKRKNTSKIRWGCWLDNPDMFDARFFNMSPREAPQVDPAQRIALITAYEAIEQAGIVPGRTPSTQEDRVGVFFGTTSNDWCESNSGQDIDTYYIPGANRAFIPGRINYVFKFSGPSYSIDTACSSSLSALHVACNALWHGDIDTAIAGGTNVLTNPDMTAGLDRGHFLSATGNCKTFDDTADGYCRGEGVATVVLKRMDDAIADKDPILGVIRGVYTNHSAEAESITRPHVGAQKAIFQHVLNHSGIRPQDISYIEMHGTGTQAGDMREMTSVLDTFSPQYPGAIQREKPLYLGAVKSNIGHGESVSGVTALVKVIMMMQNNTIPPHRGVHTRLNRRFPSNLDERNVHIAFQATEWPRGQTPRRAFINNFSAAGGNSSVLVEDPPLILKEEGADPRSSHVIAVSAKSPSALRKNLESMRRYAMSEHTEKSLCELSYTTTARRIHHSHRLMFAGSSLEDILREMESKLAIKEPFSPCAPLQSVIFTFTGQGAQYPGMGQVFFNNFSVFRSDLCRLDDLAQKLGFPTFLPIFSASTHARLEGFTPTVVQLANTCMQLALTRLWVSWGIRPSAVVGHSIGEYAALNTAGVLSDADTVYLVGKRAQLLEEKCNRGSHTMLAALASFEKVSRLLDSAPCEVACINGPEEIVLAGPRSHMTDIQKILVAHSIRCTMLQVPFAFHSSQVDPILQDFQSAIEGVTFHKPTIPVISPLLGDFVTETGTFNPNYLARHCREPVNILQALRQASTMNLVHDSSVVMEFGPHPVVSGMVKSTLGNSIKALPTLQRNRNTWEVLTESVSTLYCMGFDINWTEYHRDFPSSQRVLRLPSYSWDLKSYWIPYRNDWTLYKGDIVPESSIALPTHQNKPHSTSPKQQAPTPILETTTLHRIVDEKSTEGTFSITCESDVSRPDLSPLVQGHKVEGIGLCTPSVYADIGFTLGNYLLDRFPTRFGPDTKVVDVTDMVIEKALMPLNAGPQLLRVTASLIWSEKEASVRFYSVDENHTETVQHSHCRIKFSDRSTYQAYQEQISAVKARMFEMKTNSSSGRTYRFNGPMAYNMVQALAEFHPDYRCIDETILDNETLEAACTVSFGNVKKEGVFHTHPGYIDGLTQSGGFVMNANDKTNLGVEVFVNHGWDSFQLYEPVTDDRSYQTHVRMRPAESNQWKGDVVVLSGENLVACVRGLTIQGVPRRVLRYILQSSAKTTQTATSSVPAPSQAPVMVPQIVQVPKAKPISQISGTLTEALRIICEQSGVPLAELTDDATFANIGVDSLLALTITSAFVEELDLDVDSSLFMDYPTVADLKRFFDKINTQHAPAPAPVSDAPKQLQPSSSPVASATPSAPIHGRSKFESVLNILTEESGVEMAGLPDSTALADIGIDSLLSLVVTSRLNDELELDVSSEDFNDCLTIRDLKAHFMSKNSDNGSSAVLTPQPSRDSALPERTRPRVADTSDEEDAPVSANEFTTSARSTSKYMAVLNIISEESGMAIEDFTDNVMFADIGIDSLLSLVIGGRIREELSFDLEVDSLFVDYPDVKGLRSFFGFESNKTATNPTASQSSSSISSGTSVFDTSPSPTDLDILTPESSLSQEEFEQPLTIATKPLPPATSVTLQGLPSKAHKILFLFPDGSGSATSYAKLPRLGADVAIIGLNSPYLMDGANMTCTFDELVTLYLTEIQRRQPAGPYHLGGWSAGGILAYRAAQILQKAAANPQKPVVESLLLLDSPPPTGLGKLPKHFFDYCDQIGIFGQGTAKAPEWLITHFQGTNSVLHEYHATPFSFGTAPRTGIIWASQTVFETRAVAPPPVRPDDTEDMKFLTERRTDFSAGSWGHMFPGTEVLIETAYGADHFSLLVSLLFRD.

An N-terminal acylcarrier protein transacylase (SAT) domain region spans residues 8-243 (YLFGDQTYDY…KDIPIHAPYH (236 aa)). In terms of domain architecture, Ketosynthase family 3 (KS3) spans 372-804 (RAKIAIVGMS…GGNSSVLVED (433 aa)). Residues C544, H679, and H723 each act as for beta-ketoacyl synthase activity in the active site. A malonyl-CoA:ACP transacylase (MAT) domain region spans residues 905-1206 (FTFTGQGAQY…KALPTLQRNR (302 aa)). S996 acts as the For acyl/malonyl transferase activity in catalysis. Residues 1300 to 1616 (TTTLHRIVDE…PRRVLRYILQ (317 aa)) form a product template (PT) domain region. An N-terminal hotdog fold region spans residues 1304 to 1438 (HRIVDEKSTE…CRIKFSDRST (135 aa)). Positions 1304 to 1612 (HRIVDEKSTE…IQGVPRRVLR (309 aa)) constitute a PKS/mFAS DH domain. H1336 acts as the Proton acceptor; for dehydratase activity in catalysis. Positions 1465-1612 (TYRFNGPMAY…IQGVPRRVLR (148 aa)) are C-terminal hotdog fold. The Proton donor; for dehydratase activity role is filled by D1525. The 75-residue stretch at 1655 to 1729 (SGTLTEALRI…DLKRFFDKIN (75 aa)) folds into the Carrier 1 domain. O-(pantetheine 4'-phosphoryl)serine is present on S1689. Residues 1735 to 1762 (APAPVSDAPKQLQPSSSPVASATPSAPI) form a disordered region. Over residues 1748 to 1761 (PSSSPVASATPSAP) the composition is skewed to low complexity. The 75-residue stretch at 1765–1839 (RSKFESVLNI…DLKAHFMSKN (75 aa)) folds into the Carrier 2 domain. An O-(pantetheine 4'-phosphoryl)serine modification is found at S1799. Over residues 1840 to 1854 (SDNGSSAVLTPQPSR) the composition is skewed to polar residues. The disordered stretch occupies residues 1840–1882 (SDNGSSAVLTPQPSRDSALPERTRPRVADTSDEEDAPVSANEF). The span at 1857 to 1868 (ALPERTRPRVAD) shows a compositional bias: basic and acidic residues. Residues 1886-1964 (ARSTSKYMAV…GLRSFFGFES (79 aa)) enclose the Carrier 3 domain. S1923 carries the O-(pantetheine 4'-phosphoryl)serine modification. The disordered stretch occupies residues 1967-1993 (TATNPTASQSSSSISSGTSVFDTSPSP). The span at 1969–1990 (TNPTASQSSSSISSGTSVFDTS) shows a compositional bias: low complexity. The segment at 2020-2271 (PLPPATSVTL…GADHFSLLVS (252 aa)) is thioesterase (TE) domain.

The protein localises to the cytoplasmic vesicle. It carries out the reaction 7 malonyl-CoA + acetyl-CoA + 7 H(+) = 7,9,10-trihydroxy-3-(2-oxopropyl)-1H-benzo[g]isochromen-1-one + 7 CO2 + 8 CoA + 2 H2O. It functions in the pathway secondary metabolite biosynthesis. Non-reducing polyketide synthase; part of the gene cluster that mediates the biosynthesis of viriditoxin, one of the 'classical' secondary metabolites produced by fungi and that has antibacterial activity. The first step is performed by the polyketide synthase VdtA which condenses one acetyl-CoA and 6 malonyl-CoA units to form the heptaketide monomer backbone of viriditoxin. The product of VdtA is then O-methylated on C7 by the O-methyltransferase VdtC. The O-methyl group is important for the stereoselective coupling of the monomers at the final step of viriditoxin biosynthesis. The short-chain dehydrogenase/reductase VdtF then acts as a stereospecific reductase converting the pyrone to dihydropyrone via the reduction of the C3-C4 double bond. The FAD-binding monooxygenase VdtE then converts the ketone group into a methyl-ester group to yield semi-viriditoxin. Finally, the laccase VdtB is involved in dimerization of 2 semi-viriditoxin molecules to yield the final viriditoxin. VdtB is responsible for the regioselective 6,6'-coupling of semi-viriditoxin, which yields (M)-viriditoxin and (P)-viriditoxin at a ratio of 1:2. The non-catalytic carboxylesterase-like protein VdtD affects the stereochemistical outcome of the coupling. The highly reducing polyketide synthase VdtX is not involved in viriditoxin synthesis, but might possibly play a role in the production of additional metabolites not identified yet. This chain is Non-reducing polyketide synthase VdtA, found in Byssochlamys spectabilis (Paecilomyces variotii).